The sequence spans 144 residues: Large ribosomal subunit protein uL16 (144 aa).

It belongs to the universal ribosomal protein uL16 family. Part of the 50S ribosomal subunit.

Functionally, binds 23S rRNA and is also seen to make contacts with the A and possibly P site tRNAs. This Thermoanaerobacter pseudethanolicus (strain ATCC 33223 / 39E) (Clostridium thermohydrosulfuricum) protein is Large ribosomal subunit protein uL16.